A 226-amino-acid chain; its full sequence is uncharacterized protein (226 aa).

This sequence belongs to the SSM1 family.

This is an uncharacterized protein from Schizosaccharomyces pombe (strain 972 / ATCC 24843) (Fission yeast).